A 688-amino-acid polypeptide reads, in one-letter code: Sialic acid-binding Ig-like lectin 10 (688 aa).

A signal peptide spans 1–17; it reads MSLLLFLLSFLLDGPQG. At 18-543 the chain is on the extracellular side; the sequence is QMESYFLQVQ…DKDSATAFSK (526 aa). An Ig-like V-type domain is found at 26 to 138; the sequence is VQRIVKAQEG…SFKEEFRLQV (113 aa). 3 cysteine pairs are disulfide-bonded: Cys-37–Cys-172, Cys-42–Cys-102, and Cys-163–Cys-214. Arg-120 provides a ligand contact to N-acetylneuraminate. Positions 145–228 constitute an Ig-like C2-type 1 domain; it reads PDIFIPEVLE…SRMSTQRTVR (84 aa). N-linked (GlcNAc...) asparagine glycosylation is found at Asn-195 and Asn-246. Ig-like C2-type domains lie at 250-334 and 339-436; these read PDLH…LDLS and PQDL…LSLS. Cystine bridges form between Cys-271/Cys-318 and Cys-375/Cys-420. The chain crosses the membrane as a helical span at residues 544 to 564; that stretch reads GAVLGFGITALLALCLIVVIV. Over 565-688 the chain is Cytoplasmic; the sequence is KTLQKKGTQE…YSDYTEVRVH (124 aa). The ITIM motif 1 signature appears at 588-593; the sequence is LDYINV. Positions 602–656 are disordered; sequence RNWKAEPDAPSRSSPLDTHFPKPKKKQKDPHFTYPGCPDPTSSSQVPVSENNPEE. Over residues 641–652 the composition is skewed to polar residues; the sequence is PTSSSQVPVSEN. The ITIM motif 2 signature appears at 657–662; the sequence is LHYAAL. Tyr-659 is subject to Phosphotyrosine.

The protein belongs to the immunoglobulin superfamily. SIGLEC (sialic acid binding Ig-like lectin) family. Interacts with PTPN6/SHP-1 upon phosphorylation. Interacts with NCF1. Interacts with CD24; the probable CD24:SIGLEC10 complex is proposed to inhibit HGMB1-mediated tissue damage immune response. Interacts with HMGB1; the interaction is dependent on CD24. Associates with membrane IgM on the B cell surface. Interacts with RIGI, CBL and PTPN11. Post-translationally, phosphorylation of Tyr-659 is involved in binding to PTPN6. As to expression, expressed in B cells with high levels in pre-B cells and B1a cells of the peritoneal cavity.

Its subcellular location is the cell membrane. In terms of biological role, putative adhesion molecule that mediates sialic-acid dependent binding to cells. Preferentially binds to alpha-2,3- or alpha-2,6-linked sialic acid. The sialic acid recognition site may be masked by cis interactions with sialic acids on the same cell surface. In the immune response, seems to act as an inhibitory receptor upon ligand induced tyrosine phosphorylation by recruiting cytoplasmic phosphatase(s) via their SH2 domain(s) that block signal transduction through dephosphorylation of signaling molecules. Involved in negative regulation of B-cell antigen receptor signaling and specifically acts on B1 cells to inhibit Ca(2+) signaling, cellular expansion and antibody secretion. The inhibition of B cell activation is dependent on PTPN6/SHP-1. In association with CD24 may be involved in the selective suppression of the immune response to danger-associated molecular patterns (DAMPs) such as HMGB1, HSP70 and HSP90. In association with CD24 may regulate the immune repsonse of natural killer (NK) cells. Plays a role in the control of autoimmunity. During initiation of adaptive immune responses by CD8-alpha(+) dendritic cells inhibits cross-presentation by impairing the formation of MHC class I-peptide complexes. The function seems to implicate recruitment of PTPN6/SHP-1, which dephosphorylates NCF1 of the NADPH oxidase complex consequently promoting phagosomal acidification. Its function is as follows. (Microbial infection) During infection by RNA viruses inhibits RIG-I signaling in macrophages by promoting its CBL-dependent ubiquitination and degradation via PTPN11/SHP-2. The sequence is that of Sialic acid-binding Ig-like lectin 10 (Siglec10) from Mus musculus (Mouse).